The chain runs to 445 residues: Argininosuccinate synthase (445 aa).

Residues 18–26 and Ala-44 each bind ATP; that span reads AFSGGLDTS. Position 100 (Tyr-100) interacts with L-citrulline. ATP contacts are provided by Gly-130 and Thr-132. L-aspartate-binding residues include Thr-132, Asn-136, and Asp-137. Asn-136 is a binding site for L-citrulline. Asp-137 is a binding site for ATP. L-citrulline contacts are provided by Arg-140 and Ser-193. Position 195 (Asp-195) interacts with ATP. Thr-202, Glu-204, and Glu-281 together coordinate L-citrulline.

This sequence belongs to the argininosuccinate synthase family. Type 2 subfamily. As to quaternary structure, homotetramer.

The protein localises to the cytoplasm. The catalysed reaction is L-citrulline + L-aspartate + ATP = 2-(N(omega)-L-arginino)succinate + AMP + diphosphate + H(+). It functions in the pathway amino-acid biosynthesis; L-arginine biosynthesis; L-arginine from L-ornithine and carbamoyl phosphate: step 2/3. This is Argininosuccinate synthase (argG) from Pasteurella multocida (strain Pm70).